The chain runs to 317 residues: Acetyl-coenzyme A carboxylase carboxyl transferase subunit alpha (317 aa).

The 255-residue stretch at R40–D294 folds into the CoA carboxyltransferase C-terminal domain.

This sequence belongs to the AccA family. In terms of assembly, acetyl-CoA carboxylase is a heterohexamer composed of biotin carboxyl carrier protein (AccB), biotin carboxylase (AccC) and two subunits each of ACCase subunit alpha (AccA) and ACCase subunit beta (AccD).

The protein localises to the cytoplasm. It catalyses the reaction N(6)-carboxybiotinyl-L-lysyl-[protein] + acetyl-CoA = N(6)-biotinyl-L-lysyl-[protein] + malonyl-CoA. Its pathway is lipid metabolism; malonyl-CoA biosynthesis; malonyl-CoA from acetyl-CoA: step 1/1. Component of the acetyl coenzyme A carboxylase (ACC) complex. First, biotin carboxylase catalyzes the carboxylation of biotin on its carrier protein (BCCP) and then the CO(2) group is transferred by the carboxyltransferase to acetyl-CoA to form malonyl-CoA. This is Acetyl-coenzyme A carboxylase carboxyl transferase subunit alpha from Actinobacillus pleuropneumoniae serotype 5b (strain L20).